We begin with the raw amino-acid sequence, 152 residues long: Transcriptional repressor NrdR (152 aa).

Residues 3-34 fold into a zinc finger; it reads CPYCQHPDSDVIDTRKLHNGETIRRRRKCEAC. One can recognise an ATP-cone domain in the interval 49-139; that stretch reads ITVVKKNGER…VYRSFADIGK (91 aa).

Belongs to the NrdR family. Requires Zn(2+) as cofactor.

In terms of biological role, negatively regulates transcription of bacterial ribonucleotide reductase nrd genes and operons by binding to NrdR-boxes. This chain is Transcriptional repressor NrdR, found in Roseiflexus sp. (strain RS-1).